Here is a 65-residue protein sequence, read N- to C-terminus: Large ribosomal subunit protein bL35 (65 aa).

This sequence belongs to the bacterial ribosomal protein bL35 family.

In Clostridium kluyveri (strain NBRC 12016), this protein is Large ribosomal subunit protein bL35.